Consider the following 212-residue polypeptide: MKPPISIQASEFDSSDEEPADDEQTPIQISWLPLSRVNCSQFLGLCALPGCKFKDVRRNIQKDTEELKSSGIQDVFVFCTRGELSKYRVPNLLDLYQQYGIVTHHHPIPDGGTPDIGSCWEIMEELATCLKNNRKTLIHCYGGLGRSCLVAACLLLYLSDSISPQQAIDSLRDVRGSGAIQTIKQYNYLHEFRDKLAAYLSSRDSLSRSVSR.

The disordered stretch occupies residues methionine 1–glutamine 24. The interval methionine 1 to leucine 34 is interaction with CDK2. A compositionally biased stretch (acidic residues) spans aspartate 13–glutamine 24. Positions leucine 32 to serine 201 constitute a Tyrosine-protein phosphatase domain. Cysteine 140 serves as the catalytic Phosphocysteine intermediate.

This sequence belongs to the protein-tyrosine phosphatase family. As to quaternary structure, interacts with cyclin-dependent kinases such as CDK1, CDK2 and CDK3. Does not interact with CDK4. Interacts (via C-terminus) with phosphorylated CDK2 (via C-terminal helix). Interacts with MS4A3 (via C-terminus); the interaction enhances CDKN3 enzymatic activity.

Its subcellular location is the cytoplasm. The protein localises to the perinuclear region. The enzyme catalyses O-phospho-L-tyrosyl-[protein] + H2O = L-tyrosyl-[protein] + phosphate. It catalyses the reaction O-phospho-L-seryl-[protein] + H2O = L-seryl-[protein] + phosphate. The catalysed reaction is O-phospho-L-threonyl-[protein] + H2O = L-threonyl-[protein] + phosphate. Functionally, may play a role in cell cycle regulation. Dual specificity phosphatase active toward substrates containing either phosphotyrosine or phosphoserine residues. Dephosphorylates CDK2 at 'Thr-160' in a cyclin-dependent manner. The sequence is that of Cyclin-dependent kinase inhibitor 3 from Rattus norvegicus (Rat).